The primary structure comprises 219 residues: Glycerol-3-phosphate acyltransferase 2 (219 aa).

Helical transmembrane passes span 1–21 (MVFWIAGAVGLAIAYLLGSTP), 55–75 (WPALVVLLVDVLKGVGAVVFA), 93–113 (ALDLQSLEPWAVCLTGLAVLL), 135–155 (VLLAMSWPVGLGAAMVFGVAL), and 160–180 (IVSLSSMLAALTAIALVCGLE).

Belongs to the PlsY family. As to quaternary structure, probably interacts with PlsX.

Its subcellular location is the cell inner membrane. The catalysed reaction is an acyl phosphate + sn-glycerol 3-phosphate = a 1-acyl-sn-glycero-3-phosphate + phosphate. Its pathway is lipid metabolism; phospholipid metabolism. Catalyzes the transfer of an acyl group from acyl-phosphate (acyl-PO(4)) to glycerol-3-phosphate (G3P) to form lysophosphatidic acid (LPA). This enzyme utilizes acyl-phosphate as fatty acyl donor, but not acyl-CoA or acyl-ACP. This chain is Glycerol-3-phosphate acyltransferase 2, found in Rhizobium johnstonii (strain DSM 114642 / LMG 32736 / 3841) (Rhizobium leguminosarum bv. viciae).